Reading from the N-terminus, the 337-residue chain is Sideroflexin-4 (337 aa).

Serine 2 carries the post-translational modification N-acetylserine. A run of 3 helical transmembrane segments spans residues alanine 111–isoleucine 131, serine 133–glycine 153, and serine 165–valine 185. Lysine 197 is subject to N6-acetyllysine. A run of 2 helical transmembrane segments spans residues alanine 251–phenylalanine 271 and valine 293–isoleucine 313.

It belongs to the sideroflexin family.

Its subcellular location is the mitochondrion inner membrane. Its function is as follows. Mitochondrial amino-acid transporter. Does not act as a serine transporter: not able to mediate transport of serine into mitochondria. The polypeptide is Sideroflexin-4 (Homo sapiens (Human)).